The sequence spans 204 residues: Guanylate kinase (204 aa).

Residues 18–196 form the Guanylate kinase-like domain; that stretch reads PKLFTISAPA…SYEILKSIFI (179 aa). 25–32 is an ATP binding site; sequence APAGAGKT.

This sequence belongs to the guanylate kinase family.

It localises to the cytoplasm. The enzyme catalyses GMP + ATP = GDP + ADP. Essential for recycling GMP and indirectly, cGMP. The protein is Guanylate kinase of Chlamydia felis (strain Fe/C-56) (Chlamydophila felis).